Consider the following 120-residue polypeptide: Large ribosomal subunit protein bL19 (120 aa).

This sequence belongs to the bacterial ribosomal protein bL19 family.

Functionally, this protein is located at the 30S-50S ribosomal subunit interface and may play a role in the structure and function of the aminoacyl-tRNA binding site. This Chlorobium luteolum (strain DSM 273 / BCRC 81028 / 2530) (Pelodictyon luteolum) protein is Large ribosomal subunit protein bL19.